A 190-amino-acid chain; its full sequence is CASP-like protein 1E1 (190 aa).

The disordered stretch occupies residues Met-1 to Asn-21. Topologically, residues Met-1 to Glu-28 are cytoplasmic. Residues Ile-29–Ala-49 traverse the membrane as a helical segment. At Lys-50–Asn-83 the chain is on the extracellular side. The chain crosses the membrane as a helical span at residues Ile-84–Ser-104. Residues Lys-105–Cys-111 are Cytoplasmic-facing. A helical membrane pass occupies residues Leu-112–Gly-132. The Extracellular segment spans residues Ala-133–Gln-163. Residues Ala-164–Leu-184 traverse the membrane as a helical segment. The Cytoplasmic portion of the chain corresponds to Asp-185–Pro-190.

The protein belongs to the Casparian strip membrane proteins (CASP) family. As to quaternary structure, homodimer and heterodimers.

The protein resides in the cell membrane. The polypeptide is CASP-like protein 1E1 (Arabidopsis lyrata subsp. lyrata (Lyre-leaved rock-cress)).